The chain runs to 745 residues: Immunoglobulin superfamily containing leucine-rich repeat protein 2 (745 aa).

The N-terminal stretch at 1–18 is a signal peptide; that stretch reads MFPLRALWLVWALLGVAG. Residues 19–51 enclose the LRRNT domain; sequence SCPEPCACVDKYAHQFADCAYKELREVPEGLPA. The Extracellular segment spans residues 19–589; it reads SCPEPCACVD…VFSTKKELPS (571 aa). Asn-52 carries an N-linked (GlcNAc...) asparagine glycan. LRR repeat units lie at residues 52 to 73, 76 to 97, 100 to 123, 124 to 145, and 148 to 169; these read NVTT…AFAD, QVTS…ALAV, QLKN…RNLS, ALQL…ALGA, and DLRS…TFDA. Residue Asn-121 is glycosylated (N-linked (GlcNAc...) asparagine). Positions 181 to 232 constitute an LRRCT domain; the sequence is NPFHCGCGLVWLQAWAASTRVSLPEPDSIACASPPALQGVPVYRLPALPCAP. The region spanning 233 to 371 is the Ig-like domain; sequence PSVHLSAEPP…GANSTSIRVA (139 aa). Cys-260 and Cys-355 are joined by a disulfide. Residues 287 to 326 are disordered; that stretch reads VLSGEDDGVGAEEGEGEGDGDLLTQTQAQTPTPAPAWPAP. Positions 290-306 are enriched in acidic residues; the sequence is GEDDGVGAEEGEGEGDG. Residues Asn-337 and Asn-364 are each glycosylated (N-linked (GlcNAc...) asparagine). The tract at residues 375–466 is disordered; it reads TGPPKHAPGA…QRCGNGDPSR (92 aa). A compositionally biased stretch (acidic residues) spans 431 to 449; sequence TETEPEEDTSEGEEAEDQI. Residues Asn-474 and Asn-563 are each glycosylated (N-linked (GlcNAc...) asparagine). Residues 590–610 form a helical membrane-spanning segment; the sequence is LLVIVAVSVFLLVLATVPLLG. Residues 611–745 are Cytoplasmic-facing; that stretch reads AACCHLLAKH…INGNYRQTAG (135 aa). The interval 656–722 is disordered; the sequence is KSYPAGGEAG…FEAGSEYSDR (67 aa). Residues 665-683 are compositionally biased toward acidic residues; that stretch reads GGEEPEDVQGEGLDEDAEQ. Phosphotyrosine is present on Tyr-719. At Ser-720 the chain carries Phosphoserine.

Homomultimer. Interacts with NTRK1/TrkA.

The protein localises to the cell membrane. In terms of biological role, required for axon extension during neural development. The sequence is that of Immunoglobulin superfamily containing leucine-rich repeat protein 2 (ISLR2) from Homo sapiens (Human).